Reading from the N-terminus, the 1435-residue chain is DNA polymerase III PolC-type (1435 aa).

One can recognise an Exonuclease domain in the interval 420-576 (YVVFDVETTG…YDTEATGYLL (157 aa)).

This sequence belongs to the DNA polymerase type-C family. PolC subfamily.

The protein resides in the cytoplasm. The enzyme catalyses DNA(n) + a 2'-deoxyribonucleoside 5'-triphosphate = DNA(n+1) + diphosphate. Required for replicative DNA synthesis. This DNA polymerase also exhibits 3' to 5' exonuclease activity. The sequence is that of DNA polymerase III PolC-type from Bacillus cereus (strain ATCC 14579 / DSM 31 / CCUG 7414 / JCM 2152 / NBRC 15305 / NCIMB 9373 / NCTC 2599 / NRRL B-3711).